Here is a 217-residue protein sequence, read N- to C-terminus: Growth factor receptor-bound protein 2 (217 aa).

Met-1 is modified (N-acetylmethionine). In terms of domain architecture, SH3 1 spans 1–58; that stretch reads MEAIAKYDFKATADDELSFKRGDILKVLNEECDQNWYKAELNGKDGFIPKNYIEMKPH. N6-acetyllysine is present on residues Lys-6, Lys-50, and Lys-109. Positions 60–152 constitute an SH2 domain; it reads WFFGKIPRAK…NQQIFLRDIE (93 aa). Residue Lys-109 forms a Glycyl lysine isopeptide (Lys-Gly) (interchain with G-Cter in ubiquitin) linkage. In terms of domain architecture, SH3 2 spans 156–215; it reads QQPTYVQALFDFDPQEDGELGFRRGDFIHVMDNSDPNWWKGACHGQTGMFPRNYVTPVNR. Tyr-209 bears the Phosphotyrosine mark. Thr-211 is modified (phosphothreonine).

Belongs to the GRB2/sem-5/DRK family. Homodimer. Associates (via SH2 domain) with activated EGF and PDGF receptors (tyrosine phosphorylated). Interacts with PDGFRA (tyrosine phosphorylated); the interaction may be indirect. Also associates to other cellular Tyr-phosphorylated proteins such as SIT1, IRS1, IRS2, IRS4, SHC and LNK; probably via the concerted action of both its SH2 and SH3 domains. It also seems to interact with RAS in the signaling pathway leading to DNA synthesis. Interacts with SOS1. Forms a complex with MUC1 and SOS1, through interaction of the SH3 domains with SOS1 and the SH2 domain with phosphorylated MUC1. Interacts with phosphorylated MET. Interacts with phosphorylated TOM1L1. Interacts with the phosphorylated C-terminus of SH2B2. Interacts with phosphorylated SIT1, LAX1, LAT, LAT2 and LIME1 upon TCR and/or BCR activation. Interacts with NISCH, PTPNS1 and REPS2. Interacts with syntrophin SNTA1. Interacts (via SH3 domains) with REPS1. Interacts (via SH3 domains) with PIK3C2B. Interacts with CBL and CBLB. Interacts with AJUBA and CLNK. Interacts (via SH2 domain) with TEK/TIE2 (tyrosine phosphorylated). Interacts with SHB, INPP5D/SHIP1, SKAP1 and SKAP2. Interacts with PTPN11. Interacts with PRNP. Interacts with RALGPS1. Interacts with HCST. Interacts with KDR. Interacts with FLT1 (tyrosine-phosphorylated). Interacts with GAPT and PTPRE. Interacts (via SH2 domain) with KIF26A. Interacts (via SH3 2) with GAB2. Interacts with ADAM15. Interacts with THEMIS2. Interacts (via SH2 domain) with AXL (phosphorylated). Interacts (via SH2 domain) with KIT (phosphorylated). Interacts with PTPRJ and BCR. Interacts with PTPN23. Interacts with FLT4 (tyrosine phosphorylated). Interacts with EPHB1 and SHC1; activates the MAPK/ERK cascade to regulate cell migration. Part of a complex including TNK2, GRB2, LTK and one receptor tyrosine kinase (RTK) such as AXL and PDGFRL, in which GRB2 promotes RTK recruitment by TNK2. Interacts (via SH2 domain) with CSF1R (tyrosine phosphorylated). Interacts with ERBB4. Interacts with NTRK1 (phosphorylated upon ligand-binding). Interacts with PTK2/FAK1 (tyrosine phosphorylated). Interacts with PTK2B/PYK2 (tyrosine phosphorylated). Interacts (via SH3 domains) with GAREM1 isoform 1 (via proline-rich domain and tyrosine phosphorylated); the interaction occurs upon EGF stimulation. Interacts with DAB2. Interacts with TESPA1. Interacts with PLCG1, LAT and THEMIS upon TCR activation in thymocytes; the association is weaker in the absence of TESPA1. Interacts with CD28. Interacts with RAB13; may recruit RAB13 to the leading edge of migrating endothelial cells where it can activate RHOA. Interacts with ASAP3 (phosphorylated form). Interacts (via SH2 domain) with PTPRH (phosphorylated form). Interacts with PTPRO (phosphorylated form). Interacts with PTPRB (phosphorylated form). Interacts (via SH3 domain 2) with PRR14 (via proline-rich region). Interacts with FCRL6 (tyrosine phosphorylated form). Interacts with RHEX (via tyrosine-phosphorylated form). Interacts with DENND2B. Interacts with SPRY2. Interacts with LRRC8A. Interacts with PEAK1. Interacts with CD28. Interacts with FCRL1. Interacts with PCNA. Interacts with CD19. Interacts with BECN1. Interacts with RAD51; the interaction inhibits RAD51 ATPase to stabilize RAD51-DNA complex at stalled replication forks. Interacts with MRE11; this interaction recruits MRE11 to the DNA damage sites. Interacts with RIPK1 ans SQSTM1; these interactions play a critical role in regulating programmed necrosis. Interacts with AGO2; this interaction is important for the formation of a ternary complex containing GRB2, AGO2 and DICER1. Interacts with TIGIT; this interaction inhibits PI3K and MAPK signaling cascades. Interacts with CD226; this interaction leads to activation of VAV1, PI3K and PLCG1. In terms of assembly, interacts (via SH2-domain) with SCIMP; this interaction is dependent on phosphorylation of SCIMP 'Tyr-69'. As to quaternary structure, interacts with SOS1; this interaction competes with GRB2 to bind SOS1 via its N-terminal SH3 domain. (Microbial infection) Interacts (via SH3 domain) with hepatitis E virus/HEV ORF3 protein. In terms of assembly, (Microbial infection) Interacts with hepatitis C virus/HCV protein NS5A via its SH3 domains. As to quaternary structure, (Microbial infection) Interacts with herpes simplex virus 1 protein UL46. (Microbial infection) Interacts with B19 parvovirus protein 11K. Phosphorylation of Tyr-209 in the C-terminal SH3 domain reduces its binding to SOS1. In terms of processing, ubiquitinated by RNF173, leading to proteasomal degradation and inhibition of the RAF/MEK/ERK pathway. In the nucleus, polyubiquitinated by RBBP6 at Lys-109 at DNA damage sites.

It localises to the nucleus. The protein localises to the cytoplasm. The protein resides in the endosome. Its subcellular location is the golgi apparatus. Functionally, non-enzymatic adapter protein that plays a pivotal role in precisely regulated signaling cascades from cell surface receptors to cellular responses, including signaling transduction and gene expression. Thus, participates in many biological processes including regulation of innate and adaptive immunity, autophagy, DNA repair or necroptosis. Controls signaling complexes at the T-cell antigen receptor to facilitate the activation, differentiation, and function of T-cells. Mechanistically, engagement of the TCR leads to phosphorylation of the adapter protein LAT, which serves as docking site for GRB2. In turn, GRB2 establishes a a connection with SOS1 that acts as a guanine nucleotide exchange factor and serves as a critical regulator of KRAS/RAF1 leading to MAPKs translocation to the nucleus and activation. Functions also a role in B-cell activation by amplifying Ca(2+) mobilization and activation of the ERK MAP kinase pathway upon recruitment to the phosphorylated B-cell antigen receptor (BCR). Plays a role in switching between autophagy and programmed necrosis upstream of EGFR by interacting with components of necrosomes including RIPK1 and with autophagy regulators SQSTM1 and BECN1. Regulates miRNA biogenesis by forming a functional ternary complex with AGO2 and DICER1. Functions in the replication stress response by protecting DNA at stalled replication forks from MRE11-mediated degradation. Mechanistically, inhibits RAD51 ATPase activity to stabilize RAD51 on stalled replication forks. Additionally, directly recruits and later releases MRE11 at DNA damage sites during the homology-directed repair (HDR) process. In terms of biological role, does not bind to phosphorylated epidermal growth factor receptor (EGFR) but inhibits EGF-induced transactivation of a RAS-responsive element. Acts as a dominant negative protein over GRB2 and by suppressing proliferative signals, may trigger active programmed cell death. Mechanistically, inhibits RAS-ERK signaling and downstream cell proliferation by competing with GRB2 for SOS1 binding and thus by regulating SOS1 membrane recruitment. This is Growth factor receptor-bound protein 2 (GRB2) from Homo sapiens (Human).